The chain runs to 437 residues: UDP-N-acetylmuramate--L-alanine ligase (437 aa).

Gly114–Ser120 serves as a coordination point for ATP.

It belongs to the MurCDEF family.

The protein resides in the cytoplasm. It catalyses the reaction UDP-N-acetyl-alpha-D-muramate + L-alanine + ATP = UDP-N-acetyl-alpha-D-muramoyl-L-alanine + ADP + phosphate + H(+). It functions in the pathway cell wall biogenesis; peptidoglycan biosynthesis. In terms of biological role, cell wall formation. This chain is UDP-N-acetylmuramate--L-alanine ligase, found in Lactobacillus johnsonii (strain CNCM I-12250 / La1 / NCC 533).